Here is a 390-residue protein sequence, read N- to C-terminus: MNFLELQVTLSFCVIFLLRMLGMFMILPILSKYGMLLDGGNKFLIGLSMGIYGISQVIFQIPFGILSDKFNRKKIILLGLFMFFIGNIISASIHSIWGLIIGRFFQGSGAISGVCMAFLSDLIREENRVKSIAAIGVSFAISFLIAVVSGPIIVHYFGFFSIFWISAFLSIVCMIIVCFFVPFSKKNILKQNKTLHSYKKVLNFVLNKVFFRFYLGVFFLHFLLMIKFTMIPNQFEISGFSLDNHWKVYLGTILISFFVLFLFIFYCKYKYILENIIEICILFILFSEIIFLSAQKNLLFLIISLQIFFISFNFLEVFLSSHLSRQLSNNYRGSIMSIYSTSQFLGIFFGGVFSGWLYSFLNFSQIFYFELFIILLWLIFSFFLRNRFYL.

11 consecutive transmembrane segments (helical) span residues 10 to 30 (LSFC…LPIL), 43 to 63 (FLIG…QIPF), 81 to 101 (FMFF…GLII), 134 to 154 (AIGV…PIIV), 162 to 182 (IFWI…FFVP), 213 to 233 (FYLG…MIPN), 246 to 266 (WKVY…FIFY), 272 to 292 (ILEN…IIFL), 298 to 318 (LLFL…LEVF), 341 to 361 (TSQF…YSFL), and 363 to 383 (FSQI…FSFF).

This sequence belongs to the major facilitator superfamily.

The protein localises to the cell membrane. This is an uncharacterized protein from Buchnera aphidicola subsp. Acyrthosiphon pisum (strain APS) (Acyrthosiphon pisum symbiotic bacterium).